Reading from the N-terminus, the 213-residue chain is tRNA (guanine-N(7)-)-methyltransferase (213 aa).

4 residues coordinate S-adenosyl-L-methionine: Glu-44, Glu-69, Asn-96, and Asp-118. The active site involves Asp-118. Lys-122 provides a ligand contact to substrate. An interaction with RNA region spans residues 124–129 (RHEKRR). Substrate contacts are provided by residues Asp-154 and 191–194 (TEYE).

It belongs to the class I-like SAM-binding methyltransferase superfamily. TrmB family.

It carries out the reaction guanosine(46) in tRNA + S-adenosyl-L-methionine = N(7)-methylguanosine(46) in tRNA + S-adenosyl-L-homocysteine. The protein operates within tRNA modification; N(7)-methylguanine-tRNA biosynthesis. Functionally, catalyzes the formation of N(7)-methylguanine at position 46 (m7G46) in tRNA. This chain is tRNA (guanine-N(7)-)-methyltransferase, found in Oceanobacillus iheyensis (strain DSM 14371 / CIP 107618 / JCM 11309 / KCTC 3954 / HTE831).